A 148-amino-acid polypeptide reads, in one-letter code: UPF0756 membrane protein YeaL (148 aa).

The next 4 helical transmembrane spans lie at 14–34 (ALGFVSHNTTVAVSILVLIIV), 51–71 (LTIGIIILTIGVMAPIASGSL), 80–100 (FFNWKSLVAIAVGVIVSWLGG), and 121–141 (VLGVALFRGVPVGPLIAAGLV).

This sequence belongs to the UPF0756 family.

It is found in the cell membrane. In Escherichia fergusonii (strain ATCC 35469 / DSM 13698 / CCUG 18766 / IAM 14443 / JCM 21226 / LMG 7866 / NBRC 102419 / NCTC 12128 / CDC 0568-73), this protein is UPF0756 membrane protein YeaL.